The chain runs to 783 residues: Metabotropic glutamate receptor-like protein J (783 aa).

Residues 1–20 (MKILLYIAIILSFFSLITIS) form the signal peptide. At 21-383 (SECKIAVLLS…DYPNSLKYGV (363 aa)) the chain is on the extracellular side. The stretch at 56–85 (DFSIYYENLEESMEEAEKAFQDALHKGANL) forms a coiled coil. N-linked (GlcNAc...) asparagine glycans are attached at residues Asn181, Asn196, Asn256, Asn282, and Asn315. The chain crosses the membrane as a helical span at residues 384–404 (TIVSGVCIFICLVCMTLVVVF). Topologically, residues 405–415 (KKARVIKSSSP) are cytoplasmic. The chain crosses the membrane as a helical span at residues 416-436 (AFLLLILLGCCIIFAACILFA). The Extracellular portion of the chain corresponds to 437–443 (QSPTNQT). The N-linked (GlcNAc...) asparagine glycan is linked to Asn441. Residues 444–464 (CSARIWLLSLGYTLFLGNLLV) form a helical membrane-spanning segment. Over 465–489 (KNWRIWLLFDNPKLKKRAITNWKLY) the chain is Cytoplasmic. Residues 490 to 510 (PWVFAILAIDVMILAIWQGLG) traverse the membrane as a helical segment. The Extracellular portion of the chain corresponds to 511 to 538 (NINAESRIGYDSLTQYQYKNVCSSDDQG). The helical transmembrane segment at 539–559 (SIALYLLLVFHGLVLLVACFI) threads the bilayer. Residues 560 to 575 (SFKIKVVDIEEFNESK) are Cytoplasmic-facing. The helical transmembrane segment at 576–596 (PITTSVYIITFCLFIVIPLMV) threads the bilayer. Topologically, residues 597–604 (SPQSLTSQ) are extracellular. The chain crosses the membrane as a helical span at residues 605–625 (TTIICVCAIVTTLISMLLLFG). At 626–783 (SKFYKMATQG…GETEIDSNNV (158 aa)) the chain is on the cytoplasmic side. A compositionally biased stretch (low complexity) spans 647 to 656 (KSSSKSSKSS). Disordered regions lie at residues 647 to 696 (KSSS…FSNK) and 731 to 783 (QLQQ…SNNV). The span at 670–679 (GEDDTSDETS) shows a compositional bias: acidic residues. Positions 763 to 783 (VLSKRISNQQNGETEIDSNNV) are enriched in polar residues.

This sequence in the N-terminal section; belongs to the BMP lipoprotein family. In the C-terminal section; belongs to the G-protein coupled receptor 3 family. GABA-B receptor subfamily.

It is found in the cell membrane. The protein resides in the membrane. It localises to the endoplasmic reticulum membrane. The protein localises to the golgi apparatus membrane. Its subcellular location is the nucleus envelope. Functionally, may act during the development and be a negative regulator. This Dictyostelium discoideum (Social amoeba) protein is Metabotropic glutamate receptor-like protein J (grlJ).